The chain runs to 514 residues: Intracellular exo-alpha-L-arabinofuranosidase (514 aa).

Alpha-L-arabinofuranose is bound by residues glutamate 47 and asparagine 194. The Proton donor/acceptor role is filled by glutamate 195. The alpha-L-arabinofuranose site is built by tyrosine 261, glutamate 317, and glutamine 366. Glutamate 317 acts as the Nucleophile in catalysis.

It belongs to the glycosyl hydrolase 51 family. In terms of assembly, homohexamer; trimer of dimers.

The protein resides in the cytoplasm. It catalyses the reaction Hydrolysis of terminal non-reducing alpha-L-arabinofuranoside residues in alpha-L-arabinosides.. Its pathway is glycan metabolism; L-arabinan degradation. In terms of biological role, involved in the degradation of arabinan and is a key enzyme in the complete degradation of the plant cell wall. Catalyzes the cleavage of terminal alpha-L-arabinofuranosyl residues in different hemicellulosic homopolysaccharides (branched and debranched arabinans) and heteropolysaccharides (arabinoxylans). In Bacteroides ovatus, this protein is Intracellular exo-alpha-L-arabinofuranosidase (asdII).